The sequence spans 144 residues: Large ribosomal subunit protein uL11 (144 aa).

It belongs to the universal ribosomal protein uL11 family. In terms of assembly, part of the ribosomal stalk of the 50S ribosomal subunit. Interacts with L10 and the large rRNA to form the base of the stalk. L10 forms an elongated spine to which L12 dimers bind in a sequential fashion forming a multimeric L10(L12)X complex. In terms of processing, one or more lysine residues are methylated.

Its function is as follows. Forms part of the ribosomal stalk which helps the ribosome interact with GTP-bound translation factors. This Deinococcus deserti (strain DSM 17065 / CIP 109153 / LMG 22923 / VCD115) protein is Large ribosomal subunit protein uL11.